We begin with the raw amino-acid sequence, 189 residues long: UPF0301 protein PSEEN5058 (189 aa).

It belongs to the UPF0301 (AlgH) family.

The sequence is that of UPF0301 protein PSEEN5058 from Pseudomonas entomophila (strain L48).